The following is a 246-amino-acid chain: 1-(5-phosphoribosyl)-5-[(5-phosphoribosylamino)methylideneamino] imidazole-4-carboxamide isomerase (246 aa).

Asp-8 acts as the Proton acceptor in catalysis. Catalysis depends on Asp-131, which acts as the Proton donor.

Belongs to the HisA/HisF family.

Its subcellular location is the cytoplasm. It carries out the reaction 1-(5-phospho-beta-D-ribosyl)-5-[(5-phospho-beta-D-ribosylamino)methylideneamino]imidazole-4-carboxamide = 5-[(5-phospho-1-deoxy-D-ribulos-1-ylimino)methylamino]-1-(5-phospho-beta-D-ribosyl)imidazole-4-carboxamide. It participates in amino-acid biosynthesis; L-histidine biosynthesis; L-histidine from 5-phospho-alpha-D-ribose 1-diphosphate: step 4/9. This is 1-(5-phosphoribosyl)-5-[(5-phosphoribosylamino)methylideneamino] imidazole-4-carboxamide isomerase from Lactococcus lactis subsp. cremoris (strain SK11).